Reading from the N-terminus, the 180-residue chain is Large ribosomal subunit protein eL20 (180 aa).

Belongs to the eukaryotic ribosomal protein eL20 family.

This is Large ribosomal subunit protein eL20 from Caenorhabditis elegans.